The following is a 401-amino-acid chain: Heparan-sulfate 6-O-sulfotransferase 1 (401 aa).

Residues Met1 to Arg4 lie on the Cytoplasmic side of the membrane. The helical; Signal-anchor for type II membrane protein transmembrane segment at Ala5–Gly27 threads the bilayer. Over Pro28 to Trp401 the chain is Lumenal. 3'-phosphoadenylyl sulfate is bound at residue His83–Thr91. Residues Lys113 to Lys114, Arg130, Trp135, and His140 each bind substrate. His140 functions as the Proton acceptor in the catalytic mechanism. Positions 175 and 183 each coordinate 3'-phosphoadenylyl sulfate. Substrate contacts are provided by His187 and Trp194. Residue Asn254 is glycosylated (N-linked (GlcNAc...) asparagine). Position 307 to 309 (Met307 to Tyr309) interacts with 3'-phosphoadenylyl sulfate. An N-linked (GlcNAc...) asparagine glycan is attached at Asn310. Arg313 to Ala314 lines the 3'-phosphoadenylyl sulfate pocket. The disordered stretch occupies residues Glu367–Pro389.

The protein belongs to the sulfotransferase 6 family. Post-translationally, N-glycosylated.

Its subcellular location is the membrane. It carries out the reaction alpha-D-glucosaminyl-[heparan sulfate](n) + 3'-phosphoadenylyl sulfate = 6-sulfo-alpha-D-glucosaminyl-[heparan sulfate](n) + adenosine 3',5'-bisphosphate + H(+). Its activity is regulated as follows. Inhibited by dithiothreitol and stimulated by protamine. 6-O-sulfation enzyme which catalyzes the transfer of sulfate from 3'-phosphoadenosine 5'-phosphosulfate (PAPS) to position 6 of the N-sulfoglucosamine residue (GlcNS) of heparan sulfate. Also transfers sulfate to CDSNS-heparin and performs the crucial step modification in the biosynthesis of anticoagulant heparan sulfate (HSact). Critical for normal neuronal development where it may play a role in neuron branching. May also play a role in limb development. May prefer iduronic acid. In Cricetulus griseus (Chinese hamster), this protein is Heparan-sulfate 6-O-sulfotransferase 1.